The following is a 238-amino-acid chain: 1-(5-phosphoribosyl)-5-[(5-phosphoribosylamino)methylideneamino] imidazole-4-carboxamide isomerase (238 aa).

Catalysis depends on D8, which acts as the Proton acceptor. The active-site Proton donor is D127.

This sequence belongs to the HisA/HisF family.

It is found in the cytoplasm. The catalysed reaction is 1-(5-phospho-beta-D-ribosyl)-5-[(5-phospho-beta-D-ribosylamino)methylideneamino]imidazole-4-carboxamide = 5-[(5-phospho-1-deoxy-D-ribulos-1-ylimino)methylamino]-1-(5-phospho-beta-D-ribosyl)imidazole-4-carboxamide. It functions in the pathway amino-acid biosynthesis; L-histidine biosynthesis; L-histidine from 5-phospho-alpha-D-ribose 1-diphosphate: step 4/9. The chain is 1-(5-phosphoribosyl)-5-[(5-phosphoribosylamino)methylideneamino] imidazole-4-carboxamide isomerase from Nitratiruptor sp. (strain SB155-2).